We begin with the raw amino-acid sequence, 637 residues long: Pyrethroid hydrolase (637 aa).

The catalysed reaction is (-)-trans-permethrin + H2O = (3-phenoxyphenyl)methanol + (1S,3R)-3-(2,2-dichlorovinyl)-2,2-dimethylcyclopropanecarboxylate + H(+). Its activity is regulated as follows. Inhibited by Hg(2+), Ag(+) and rho-chloromercuribenzoate. In terms of biological role, catalyzes the hydrolysis of pyrethroids pesticides. Hydrolyzes cis-permethrin at approximately equal rate to trans-permethrin. This chain is Pyrethroid hydrolase (estP), found in Klebsiella sp.